Consider the following 115-residue polypeptide: CRISPR-associated endoribonuclease Cas2 (115 aa).

D22 contacts Mg(2+).

It belongs to the CRISPR-associated endoribonuclease Cas2 protein family. In terms of assembly, homodimer, forms a heterotetramer with a Cas1 homodimer. Mg(2+) is required as a cofactor.

Functionally, CRISPR (clustered regularly interspaced short palindromic repeat), is an adaptive immune system that provides protection against mobile genetic elements (viruses, transposable elements and conjugative plasmids). CRISPR clusters contain sequences complementary to antecedent mobile elements and target invading nucleic acids. CRISPR clusters are transcribed and processed into CRISPR RNA (crRNA). Functions as a ssRNA-specific endoribonuclease. Involved in the integration of spacer DNA into the CRISPR cassette. The chain is CRISPR-associated endoribonuclease Cas2 from Flavobacterium psychrophilum (strain ATCC 49511 / DSM 21280 / CIP 103535 / JIP02/86).